Here is a 460-residue protein sequence, read N- to C-terminus: Elongation factor 1-alpha (460 aa).

N,N,N-trimethylglycine is present on Gly-2. Lys-3 bears the N6,N6-dimethyllysine; alternate mark. N6-methyllysine; alternate is present on Lys-3. Residues 6 to 241 enclose the tr-type G domain; that stretch reads KTHINVVVIG…DSIEPPKRPT (236 aa). Residues 15–22 form a G1 region; sequence GHVDSGKS. Residue 15–22 participates in GTP binding; it reads GHVDSGKS. The interval 71-75 is G2; the sequence is GITID. Position 80 is an N6,N6,N6-trimethyllysine (Lys-80). The interval 92–95 is G3; sequence DAPG. GTP contacts are provided by residues 92–96 and 154–157; these read DAPGH and NKMD. The G4 stretch occupies residues 154 to 157; the sequence is NKMD. Residues 193–195 are G5; it reads SGF. Lys-317 carries the N6,N6-dimethyllysine; alternate modification. Lys-317 carries the post-translational modification N6-methyllysine; alternate. Position 391 is an N6-methyllysine (Lys-391).

It belongs to the TRAFAC class translation factor GTPase superfamily. Classic translation factor GTPase family. EF-Tu/EF-1A subfamily.

Its subcellular location is the cytoplasm. Functionally, this protein promotes the GTP-dependent binding of aminoacyl-tRNA to the A-site of ribosomes during protein biosynthesis. The protein is Elongation factor 1-alpha (tef1) of Hypocrea jecorina (Trichoderma reesei).